Consider the following 455-residue polypeptide: MPNPDTATMTPREIVQELDRHIVGQHDAKRAVAIALRNRWRRMQLPEELRNEVMPKNILMIGPTGVGKTEIARRLATLANAPFVKVEATRFTEVGYVGKDVEQIIRDLADTSVKLYREQAKVRVRNQAEERAEDRILDALLPRRAAGIGFDPEAARNEPSSQDNETRIKFRRMLRNGELDEREIELDVAVNASMDIMTPPGMEEMGQQLRQMFSNLGSGKSQKRKLTIKAARPLLIEEEAGKLVNEDDVRTAAIEACEQHGIVFIDEIDKVAKRGEAGSSGGDVSREGVQRDLLPLVEGSNVSTKYGTVKTDHILFIASGAFHLAKPSDLIPELQGRFPIRVELTALTKADFVRILTEPKAALIKQYEALLQTEGVALTFAPDAVDRLAEIAAQVNERQENIGARRLHTVLERLLDVLSYEAPDRDGQSVTVDAAYVDAQLGELVQDPDLSRYIL.

Residues Val23, 65–70 (GVGKTE), Asp266, Glu333, and Arg405 contribute to the ATP site.

Belongs to the ClpX chaperone family. HslU subfamily. In terms of assembly, a double ring-shaped homohexamer of HslV is capped on each side by a ring-shaped HslU homohexamer. The assembly of the HslU/HslV complex is dependent on binding of ATP.

The protein localises to the cytoplasm. Its function is as follows. ATPase subunit of a proteasome-like degradation complex; this subunit has chaperone activity. The binding of ATP and its subsequent hydrolysis by HslU are essential for unfolding of protein substrates subsequently hydrolyzed by HslV. HslU recognizes the N-terminal part of its protein substrates and unfolds these before they are guided to HslV for hydrolysis. The chain is ATP-dependent protease ATPase subunit HslU from Xanthomonas euvesicatoria pv. vesicatoria (strain 85-10) (Xanthomonas campestris pv. vesicatoria).